A 135-amino-acid chain; its full sequence is Crustacean hyperglycemic hormones A* (135 aa).

The first 26 residues, 1–26 (MVSFRTMWSVVVVVVVASLASSGVQG), serve as a signal peptide directing secretion. Gln62 bears the Pyrrolidone carboxylic acid mark. Intrachain disulfides connect Cys68-Cys104, Cys84-Cys100, and Cys87-Cys113. Valine amide is present on Val133.

Belongs to the arthropod CHH/MIH/GIH/VIH hormone family. As to expression, produced by the medulla terminalis X-organ in the eyestalks and transported to the sinus gland where they are stored and released.

It is found in the secreted. Functionally, hormone found in the sinus gland of isopods and decapods which controls the blood sugar level. Has a secretagogue action over the amylase released from the midgut gland. May act as a stress hormone and may be involved in the control of molting and reproduction. The polypeptide is Crustacean hyperglycemic hormones A* (CHHA*) (Faxonius limosus (Spinycheek crayfish)).